We begin with the raw amino-acid sequence, 241 residues long: MAGHSKWNNIQGRKNAQDSKRSKVFQKLAREIFVAAKKGPDPNLNPSLRLVMDKAKAVNMPNDNIKRAIDKAAGNTSGENYDEVTYEGYAPGGIAVLVHALTDNKNRTSTNVRVAFNKNGGSLGETGSVSYMFDRKGYLVILREGLTVDEEEFMLEAIEAGADDVEVSDDVFEVFTEPGAFSDVKDALQQAGYTFATAELSMFPTVYNEIAENNQTQFDKMMEALEDDDDVQEVYTNAEIN.

Polar residues predominate over residues 1 to 14 (MAGHSKWNNIQGRK). The disordered stretch occupies residues 1–22 (MAGHSKWNNIQGRKNAQDSKRS).

The protein belongs to the TACO1 family.

The protein localises to the cytoplasm. This Listeria innocua serovar 6a (strain ATCC BAA-680 / CLIP 11262) protein is Probable transcriptional regulatory protein lin1570.